A 439-amino-acid polypeptide reads, in one-letter code: Protein translocase subunit SecY (439 aa).

Transmembrane regions (helical) follow at residues 23–43 (IASV…PIPG), 77–97 (IFAL…LLTL), 125–145 (LVLA…ISGM), 154–174 (FYFY…LMWL), 187–207 (ISII…VHTI), 217–237 (ILLF…VVFI), 274–294 (VIPA…ISWF), 317–337 (YLIL…GLVF), 369–389 (IMIR…LIPE), and 397–417 (VPFY…MDFI).

Belongs to the SecY/SEC61-alpha family. In terms of assembly, component of the Sec protein translocase complex. Heterotrimer consisting of SecY, SecE and SecG subunits. The heterotrimers can form oligomers, although 1 heterotrimer is thought to be able to translocate proteins. Interacts with the ribosome. Interacts with SecDF, and other proteins may be involved. Interacts with SecA.

The protein localises to the cell membrane. In terms of biological role, the central subunit of the protein translocation channel SecYEG. Consists of two halves formed by TMs 1-5 and 6-10. These two domains form a lateral gate at the front which open onto the bilayer between TMs 2 and 7, and are clamped together by SecE at the back. The channel is closed by both a pore ring composed of hydrophobic SecY resides and a short helix (helix 2A) on the extracellular side of the membrane which forms a plug. The plug probably moves laterally to allow the channel to open. The ring and the pore may move independently. This is Protein translocase subunit SecY from Buchnera aphidicola subsp. Schizaphis graminum (strain Sg).